We begin with the raw amino-acid sequence, 956 residues long: MAM domain-containing glycosylphosphatidylinositol anchor protein 1 (956 aa).

An N-terminal signal peptide occupies residues Met-1–Gly-18. 2 consecutive Ig-like domains span residues Pro-24–Arg-123 and Pro-132–Thr-230. N-linked (GlcNAc...) asparagine glycosylation is present at Asn-42. Intrachain disulfides connect Cys-60/Cys-108 and Cys-157/Cys-214. 4 N-linked (GlcNAc...) asparagine glycosylation sites follow: Asn-235, Asn-247, Asn-257, and Asn-307. Ig-like domains are found at residues Pro-240–Asn-323, Pro-338–Asn-432, Pro-440–Gln-532, and Pro-539–Ser-650. 2 cysteine pairs are disulfide-bonded: Cys-262-Cys-308 and Cys-357-Cys-415. N-linked (GlcNAc...) asparagine glycosylation occurs at Asn-432. 2 disulfides stabilise this stretch: Cys-463–Cys-514 and Cys-560–Cys-616. Residues Cys-627–Ile-744 enclose the Fibronectin type-III domain. Residues Asn-752 to Arg-919 form the MAM domain. Polar residues predominate over residues Leu-780–Asn-789. The segment at Leu-780–Thr-799 is disordered. The GPI-anchor amidated serine moiety is linked to residue Ser-933. A propeptide spans Gly-934–Arg-956 (removed in mature form).

In terms of assembly, interacts heterophilically through its MAM domain with proteins in axon-rich regions and through its Ig-like domains with proteins in differentiating muscle. Interacts (through the Ig-like domains) with NLGN2. As to expression, expressed by neurons in layers 2 and 3 of the cortex during their migration and settling in the cortical plate. Also found in layers 4 and 6a. From 9.5 dpc-13.5 dpc, detected in the marginal zone of the developing cortex. At 16.5 dpc, modest expression is found in the intermediate zone. At postnatal day 1, evident in the superficial cortical plate. By postnatal day 7, expression is limited to layers 2 and 3 throughout most of the cortex.

The protein resides in the cell membrane. Its function is as follows. Required for radial migration of cortical neurons in the superficial layer of the neocortex. Plays a role in the formation or maintenance of inhibitory synapses. May function by inhibiting the activity of NLGN2. This chain is MAM domain-containing glycosylphosphatidylinositol anchor protein 1, found in Mus musculus (Mouse).